The following is a 210-amino-acid chain: RNA chaperone ProQ (210 aa).

Residues 118–146 (KAAKPEKKRPARRVAAKGQHAKETTTNKA) are disordered. The span at 123–132 (EKKRPARRVA) shows a compositional bias: basic residues.

This sequence belongs to the ProQ family.

The protein resides in the cytoplasm. Functionally, RNA chaperone with significant RNA binding, RNA strand exchange and RNA duplexing activities. The protein is RNA chaperone ProQ of Pasteurella multocida (strain Pm70).